We begin with the raw amino-acid sequence, 461 residues long: Bifunctional protein GlmU (461 aa).

Residues 1–229 form a pyrophosphorylase region; the sequence is MEKYVVVLAA…FSESLGVNDR (229 aa). UDP-N-acetyl-alpha-D-glucosamine contacts are provided by residues 8-11, K22, Q72, and 77-78; these read LAAG and GT. Position 102 (D102) interacts with Mg(2+). Positions 139, 154, 169, and 227 each coordinate UDP-N-acetyl-alpha-D-glucosamine. N227 is a Mg(2+) binding site. Residues 230-250 form a linker region; that stretch reads VALAQATKTMQRRINEAHMRD. The interval 251-461 is N-acetyltransferase; that stretch reads GVSFIDPDTA…LPLSKDKDWE (211 aa). Residues R332 and K350 each coordinate UDP-N-acetyl-alpha-D-glucosamine. H362 functions as the Proton acceptor in the catalytic mechanism. Y365 and N376 together coordinate UDP-N-acetyl-alpha-D-glucosamine. Acetyl-CoA contacts are provided by residues 385-386, A422, and R439; that span reads NY.

The protein in the N-terminal section; belongs to the N-acetylglucosamine-1-phosphate uridyltransferase family. It in the C-terminal section; belongs to the transferase hexapeptide repeat family. As to quaternary structure, homotrimer. Mg(2+) is required as a cofactor.

The protein resides in the cytoplasm. The catalysed reaction is alpha-D-glucosamine 1-phosphate + acetyl-CoA = N-acetyl-alpha-D-glucosamine 1-phosphate + CoA + H(+). It catalyses the reaction N-acetyl-alpha-D-glucosamine 1-phosphate + UTP + H(+) = UDP-N-acetyl-alpha-D-glucosamine + diphosphate. It participates in nucleotide-sugar biosynthesis; UDP-N-acetyl-alpha-D-glucosamine biosynthesis; N-acetyl-alpha-D-glucosamine 1-phosphate from alpha-D-glucosamine 6-phosphate (route II): step 2/2. It functions in the pathway nucleotide-sugar biosynthesis; UDP-N-acetyl-alpha-D-glucosamine biosynthesis; UDP-N-acetyl-alpha-D-glucosamine from N-acetyl-alpha-D-glucosamine 1-phosphate: step 1/1. The protein operates within bacterial outer membrane biogenesis; LPS lipid A biosynthesis. Its function is as follows. Catalyzes the last two sequential reactions in the de novo biosynthetic pathway for UDP-N-acetylglucosamine (UDP-GlcNAc). The C-terminal domain catalyzes the transfer of acetyl group from acetyl coenzyme A to glucosamine-1-phosphate (GlcN-1-P) to produce N-acetylglucosamine-1-phosphate (GlcNAc-1-P), which is converted into UDP-GlcNAc by the transfer of uridine 5-monophosphate (from uridine 5-triphosphate), a reaction catalyzed by the N-terminal domain. The sequence is that of Bifunctional protein GlmU from Lactobacillus helveticus (strain DPC 4571).